A 624-amino-acid chain; its full sequence is Kelch-like protein diablo (624 aa).

Positions 1-21 (MGDPLLPGSTGLGSGPAAAAT) are enriched in low complexity. Residues 1–55 (MGDPLLPGSTGLGSGPAAAATGGSGTTGTGLGSGGTSGAERPPSPARLTHTSEKH) form a disordered region. A compositionally biased stretch (gly residues) spans 22-37 (GGSGTTGTGLGSGGTS). The 68-residue stretch at 73–140 (CDVVLNVGGR…CYTAHIIVEE (68 aa)) folds into the BTB domain. One can recognise a BACK domain in the interval 175-277 (CLGIRAFADT…SPKFLVGTVG (103 aa)). 6 Kelch repeats span residues 324–370 (VLFA…VLND), 372–418 (LYAV…VLDG), 419–465 (FLYA…VLSG), 467–512 (LYAI…VFNN), 514–559 (IYAV…VVNG), and 560–606 (QLYA…VMRA).

It functions in the pathway protein modification; protein ubiquitination. Probable substrate-specific adapter of an E3 ubiquitin-protein ligase complex which mediates the ubiquitination and subsequent proteasomal degradation of target proteins. May have a role in synapse differentiation and growth. The sequence is that of Kelch-like protein diablo from Drosophila virilis (Fruit fly).